The following is a 144-amino-acid chain: UPF0102 protein BPSL3274 (144 aa).

Residues 1 to 28 (MCHAREASPGTGEPEAAPRDNFPREAGS) are disordered. Residues 16-28 (AAPRDNFPREAGS) are compositionally biased toward basic and acidic residues.

This sequence belongs to the UPF0102 family.

This is UPF0102 protein BPSL3274 from Burkholderia pseudomallei (strain K96243).